We begin with the raw amino-acid sequence, 558 residues long: MENEEQESGEILSSEEMMMLDIQPKPLSSLLSFSTLSPSVDENNNCDFDDLNSIFKDFQKQKKNLKDNILKFYNKKKENNDNFFNILKSYITTNNNYNNHFYFIISIYNILYENYKDETPFEYFIEIIYIVSINDHLGPSDRLSSILFFSKYFNKNGNKNQLFNSLLSLIKIENISSTIVNNIIEFLGSILSLSISLGLYNILQLTYDWIIEFANQPTTAITELLNQIINNINNINNNNNNNIKTETESEIESKSESESESESKIETEIEIVTEREIEIEMEIKKENEKQVKVDIFYISIKLLDILINDHLILNESSNNFENLPSNSFDFSSLLTSIIISHYLSPFNKTNSYINDSNKRDNNYIEFTVIPRTLSLLSNYWLRQTPQLLFKFNEKQSKSLNHINLLKEIITISIFSNYINYNNNNNNNNNNNNNNNNNNNNNNNNSGEKNELVEPYIMKLNSVLIDAIYQISECKNDDFSNLIIKNISNTLNPEFFINIITMINNFNFDNKKFVDRISTIIQIYSKTCKRINPNYLNTHIELLKQLNVQTQISITILNQ.

Residues 47 to 78 (DFDDLNSIFKDFQKQKKNLKDNILKFYNKKKE) adopt a coiled-coil conformation. Disordered regions lie at residues 239–266 (NNNN…SKIE) and 424–447 (NNNN…NSGE). Residues 245–266 (TETESEIESKSESESESESKIE) are compositionally biased toward basic and acidic residues. The segment covering 424–444 (NNNNNNNNNNNNNNNNNNNNN) has biased composition (low complexity).

This is an uncharacterized protein from Dictyostelium discoideum (Social amoeba).